A 406-amino-acid chain; its full sequence is Tyrosine--tRNA ligase (406 aa).

Y35 serves as a coordination point for L-tyrosine. A 'HIGH' region motif is present at residues 40-49 (PTGPSLHIGH). Residues Y168 and Q172 each contribute to the L-tyrosine site. Positions 228–232 (KMGKS) match the 'KMSKS' region motif. K231 provides a ligand contact to ATP. One can recognise an S4 RNA-binding domain in the interval 339 to 405 (IGIIDLFAEA…GKKRFMRIIF (67 aa)).

The protein belongs to the class-I aminoacyl-tRNA synthetase family. TyrS type 1 subfamily. As to quaternary structure, homodimer.

The protein resides in the cytoplasm. The enzyme catalyses tRNA(Tyr) + L-tyrosine + ATP = L-tyrosyl-tRNA(Tyr) + AMP + diphosphate + H(+). Its function is as follows. Catalyzes the attachment of tyrosine to tRNA(Tyr) in a two-step reaction: tyrosine is first activated by ATP to form Tyr-AMP and then transferred to the acceptor end of tRNA(Tyr). The sequence is that of Tyrosine--tRNA ligase from Treponema denticola (strain ATCC 35405 / DSM 14222 / CIP 103919 / JCM 8153 / KCTC 15104).